A 438-amino-acid chain; its full sequence is Battenin (438 aa).

Residues 1–29 are disordered; sequence MGGCAGSRRRLLDSEEEETAPEPRPPRSY. Over 1 to 37 the chain is Cytoplasmic; that stretch reads MGGCAGSRRRLLDSEEEETAPEPRPPRSYHKGALWKN. Residue S14 is modified to Phosphoserine. A helical membrane pass occupies residues 38-58; it reads VMGFWLLGLCNNFSYVVMLSA. Over 59-127 the chain is Lumenal; it reads AHDILSHQRA…GLHLLPYSPR (69 aa). The interval 68–89 is disordered; the sequence is ASGNQSHVDPDPPPTAHNSSSR. N-linked (GlcNAc...) asparagine glycans are attached at residues N71 and N85. The chain crosses the membrane as a helical span at residues 128 to 148; that stretch reads VLVSGICAAGSFILVAFSHSV. The Cytoplasmic portion of the chain corresponds to 149–151; the sequence is GTS. A helical transmembrane segment spans residues 152-172; the sequence is LCGVVLASISSGVGEVTFLSL. At 173–182 the chain is on the lumenal side; the sequence is TAFYPRAVIS. The helical transmembrane segment at 183-203 threads the bilayer; the sequence is WWSSGTGGAGLMGALSYLGLT. Residues 204–277 are Cytoplasmic-facing; the sequence is QAGLSPQHTL…NLSLQERWTV (74 aa). The segment at 236 to 267 is disordered; it reads PQDPGGEEEAETSARQPLIDSETPESKPDSSS. A Lysosomal targeting motif motif is present at residues 242–244; sequence EEE. The Lysosomal targeting motif. Required for AP1G1, AP2A2 and AP3D1 interaction signature appears at 253-254; sequence LI. The chain crosses the membrane as a helical span at residues 278 to 298; the sequence is FKGLLWYIVPLVLVYFAEYFI. At 299 to 346 the chain is on the lumenal side; sequence NQGLFELLFFRNTSLNHAQQYRWYQMLYQAGVFVSRSSLHCCRIRFTW. N-linked (GlcNAc...) asparagine glycosylation is present at N310. Residues 347-367 form a helical membrane-spanning segment; that stretch reads VLALLQCLNLAFLLVDVWFSF. The Cytoplasmic segment spans residues 368–438; that stretch reads LPSIYLVFLI…PLHDFLCHLS (71 aa). The Lysosomal targeting motif motif lies at 409–419; it reads MAAACISDTLG. Residue C435 is modified to Cysteine methyl ester. A lipid anchor (S-farnesyl cysteine) is attached at C435. A propeptide spans 436-438 (removed in mature form); it reads HLS.

Belongs to the battenin family. In terms of assembly, interacts with DCTN1, KIF3A, RAB7A and RILP. Interacts with CLN5. Post-translationally, highly glycosylated. Farnesylation is important for trafficking to lysosomes.

Its subcellular location is the lysosome membrane. It localises to the late endosome. The protein localises to the lysosome. Its function is as follows. Mediates microtubule-dependent, anterograde transport connecting the Golgi network, endosomes, autophagosomes, lysosomes and plasma membrane, and participates in several cellular processes such as regulation of lysosomal pH, lysosome protein degradation, receptor-mediated endocytosis, autophagy, transport of proteins and lipids from the TGN, apoptosis and synaptic transmission. Facilitates the proteins transport from trans-Golgi network (TGN)-to other membrane compartments such as transport of microdomain-associated proteins to the plasma membrane, IGF2R transport to the lysosome where it regulates the CTSD release leading to regulation of CTSD maturation and thereby APP intracellular processing. Moreover regulates CTSD activity in response to osmotic stress. Also binds galactosylceramide and transports it from the trans Golgi to the rafts, which may have immediate and downstream effects on cell survival by modulating ceramide synthesis. At the plasma membrane, regulates actin-dependent events including filopodia formation, cell migration, and pinocytosis through ARF1-CDC42 pathway and also the cytoskeleton organization through interaction with MYH10 and fodrin leading to the regulation of the plasma membrane association of Na+, K+ ATPase complex. Regulates synaptic transmission in the amygdala, hippocampus, and cerebellum through regulation of synaptic vesicles density and their proximity to active zones leading to modulation of short-term plasticity and age-dependent anxious behavior, learning and memory. Regulates autophagic vacuoles (AVs) maturation by modulating the trafficking between endocytic and autophagolysosomal/lysosomal compartments, which involves vesicle fusion leading to regulation of degradation process. Also participates in cellular homeostasis of compounds such as, water, ions, amino acids, proteins and lipids in several tissue namely in brain and kidney through regulation of their transport and synthesis. This chain is Battenin, found in Canis lupus familiaris (Dog).